An 89-amino-acid polypeptide reads, in one-letter code: UPF0298 protein GK1096 (89 aa).

Belongs to the UPF0298 family.

The protein localises to the cytoplasm. The chain is UPF0298 protein GK1096 from Geobacillus kaustophilus (strain HTA426).